We begin with the raw amino-acid sequence, 172 residues long: uncharacterized protein (172 aa).

The protein belongs to the flavoredoxin family. FMN is required as a cofactor.

This is an uncharacterized protein from Pyrococcus abyssi (strain GE5 / Orsay).